A 411-amino-acid polypeptide reads, in one-letter code: Multifunctional CCA protein (411 aa).

ATP-binding residues include Gly8 and Arg11. Gly8 and Arg11 together coordinate CTP. Mg(2+)-binding residues include Asp21 and Asp23. ATP-binding residues include Arg91, Arg137, and Arg140. Residues Arg91, Arg137, and Arg140 each contribute to the CTP site. The region spanning 226 to 327 is the HD domain; it reads TGVHVMLVID…LRFLQETDAL (102 aa).

Belongs to the tRNA nucleotidyltransferase/poly(A) polymerase family. Bacterial CCA-adding enzyme type 1 subfamily. In terms of assembly, monomer. Can also form homodimers and oligomers. Mg(2+) is required as a cofactor. It depends on Ni(2+) as a cofactor.

The enzyme catalyses a tRNA precursor + 2 CTP + ATP = a tRNA with a 3' CCA end + 3 diphosphate. It carries out the reaction a tRNA with a 3' CCA end + 2 CTP + ATP = a tRNA with a 3' CCACCA end + 3 diphosphate. Its function is as follows. Catalyzes the addition and repair of the essential 3'-terminal CCA sequence in tRNAs without using a nucleic acid template. Adds these three nucleotides in the order of C, C, and A to the tRNA nucleotide-73, using CTP and ATP as substrates and producing inorganic pyrophosphate. tRNA 3'-terminal CCA addition is required both for tRNA processing and repair. Also involved in tRNA surveillance by mediating tandem CCA addition to generate a CCACCA at the 3' terminus of unstable tRNAs. While stable tRNAs receive only 3'-terminal CCA, unstable tRNAs are marked with CCACCA and rapidly degraded. The chain is Multifunctional CCA protein from Methylobacillus flagellatus (strain ATCC 51484 / DSM 6875 / VKM B-1610 / KT).